We begin with the raw amino-acid sequence, 183 residues long: Maltose O-acetyltransferase (183 aa).

Asparagine 83 contacts acetyl-CoA. Catalysis depends on histidine 113, which acts as the Proton donor/acceptor. Acetyl-CoA is bound by residues glycine 140, serine 158, 163–164, arginine 178, and lysine 181; that span reads TK.

Belongs to the transferase hexapeptide repeat family. In terms of assembly, homodimer.

The enzyme catalyses D-maltose + acetyl-CoA = 1-O-acetylmaltose + CoA. In terms of biological role, catalyzes the CoA-dependent transfer of an acetyl group to maltose and other sugars. Acetylates glucose exclusively at the C6 position and maltose at the C6 position of the non-reducing end glucosyl moiety. Is able to acetylate maltooligosaccharides. The sequence is that of Maltose O-acetyltransferase (maa) from Escherichia coli (strain K12).